The primary structure comprises 229 residues: Phosphoglycolate phosphatase (229 aa).

Asp18 serves as the catalytic Nucleophile. The Mg(2+) site is built by Asp18, Asp20, and Asp176.

It belongs to the HAD-like hydrolase superfamily. CbbY/CbbZ/Gph/YieH family. Mg(2+) is required as a cofactor.

It catalyses the reaction 2-phosphoglycolate + H2O = glycolate + phosphate. Its pathway is organic acid metabolism; glycolate biosynthesis; glycolate from 2-phosphoglycolate: step 1/1. In terms of biological role, specifically catalyzes the dephosphorylation of 2-phosphoglycolate. Is involved in the dissimilation of the intracellular 2-phosphoglycolate formed during the DNA repair of 3'-phosphoglycolate ends, a major class of DNA lesions induced by oxidative stress. In Xylella fastidiosa (strain Temecula1 / ATCC 700964), this protein is Phosphoglycolate phosphatase.